A 333-amino-acid polypeptide reads, in one-letter code: Protein 2 (333 aa).

Disordered regions lie at residues 1-41 and 57-84; these read MTGR…SENA and LGAG…LPPT. A compositionally biased stretch (polar residues) spans 24–33; it reads QETTKQTTSA. Positions 62 to 79 are enriched in acidic residues; it reads DYDETEADPADTYGDTEA.

The sequence is that of Protein 2 from Lactuca sativa (Garden lettuce).